A 397-amino-acid polypeptide reads, in one-letter code: Dimethyladenosine transferase 2, mitochondrial (397 aa).

The N-terminal 44 residues, 1 to 44 (MRGLAMRLPPRLALSVLAGRGPSCILGSGAATRKDWQERNRRSF), are a transit peptide targeting the mitochondrion. Residues isoleucine 75, glutamate 124, and aspartate 150 each coordinate S-adenosyl-L-methionine. Residues 329-330 (KR) form a DNA-binding region.

This sequence belongs to the class I-like SAM-binding methyltransferase superfamily. rRNA adenine N(6)-methyltransferase family. KsgA subfamily. As to quaternary structure, homodimer. Component of the mitochondrial transcription initiation complex, composed at least of TFB2M, TFAM and POLRMT. In this complex TFAM recruits POLRMT to the promoter whereas TFB2M induces structural changes in POLRMT to enable promoter opening and trapping of the DNA non-template strand. Interacts with mitochondrial RNA polymerase POLRMT. Interacts with TFAM.

Its subcellular location is the mitochondrion. The enzyme catalyses adenosine in rRNA + S-adenosyl-L-methionine = N(6)-methyladenosine in rRNA + S-adenosyl-L-homocysteine + H(+). S-adenosyl-L-methionine-dependent rRNA methyltransferase which may methylate two specific adjacent adenosines in the loop of a conserved hairpin near the 3'-end of 12S mitochondrial rRNA. Component of the mitochondrial transcription initiation complex, composed at least of TFB2M, TFAM and POLRMT that is required for basal transcription of mitochondrial DNA. In this complex TFAM recruits POLRMT to a specific promoter whereas TFB2M induces structural changes in POLRMT to enable promoter opening and trapping of the DNA non-template strand. Stimulates transcription independently of the methyltransferase activity. The protein is Dimethyladenosine transferase 2, mitochondrial of Rattus norvegicus (Rat).